Reading from the N-terminus, the 702-residue chain is Rho GTPase-activating protein 22 (702 aa).

The 109-residue stretch at 43-151 (PVLKAGWLRK…WVQAIRRVIW (109 aa)) folds into the PH domain. One can recognise a Rho-GAP domain in the interval 161–355 (QRLEDTVHHE…VLIRKHGQLF (195 aa)). Disordered stretches follow at residues 360–433 (LEEP…HTLP), 438–457 (SFRQ…SSLE), 480–511 (RASS…FSST), and 555–596 (PSPL…TQAH). A phosphoserine mark is found at serine 365 and serine 397. Polar residues-rich tracts occupy residues 407–421 (SRTS…TGPA), 438–456 (SFRQ…NSSL), 491–504 (GSAQ…NVPP), and 581–594 (SGSS…SPTQ). The stretch at 594–691 (QAHVRRCRAL…EEFFSTLGSL (98 aa)) forms a coiled coil.

In terms of assembly, interacts with VEZF1. As to expression, predominantly present in endothelial cells (at protein level).

The protein resides in the cytoplasm. The protein localises to the nucleus. Functionally, rho GTPase-activating protein involved in the signal transduction pathway that regulates endothelial cell capillary tube formation during angiogenesis. Acts as a GTPase activator for the RAC1 by converting it to an inactive GDP-bound state. Inhibits RAC1-dependent lamellipodia formation. May also play a role in transcription regulation via its interaction with VEZF1, by regulating activity of the endothelin-1 (EDN1) promoter. The protein is Rho GTPase-activating protein 22 (Arhgap22) of Mus musculus (Mouse).